We begin with the raw amino-acid sequence, 198 residues long: Urease accessory protein UreE (198 aa).

Residues 137–198 form a disordered region; the sequence is ARGAYHSPGG…RGHDHDHKHD (62 aa). Over residues 149-198 the composition is skewed to basic and acidic residues; it reads HGHDHDHNHDHGHDHAHDHNHGHDHDHEHGYEHEHEHRHDRGHDHDHKHD.

The protein belongs to the UreE family.

Its subcellular location is the cytoplasm. Its function is as follows. Involved in urease metallocenter assembly. Binds nickel. Probably functions as a nickel donor during metallocenter assembly. The polypeptide is Urease accessory protein UreE (Rhizobium johnstonii (strain DSM 114642 / LMG 32736 / 3841) (Rhizobium leguminosarum bv. viciae)).